Here is a 393-residue protein sequence, read N- to C-terminus: NAD(P)H-quinone oxidoreductase subunit H, chloroplastic (393 aa).

This sequence belongs to the complex I 49 kDa subunit family. In terms of assembly, NDH is composed of at least 16 different subunits, 5 of which are encoded in the nucleus.

Its subcellular location is the plastid. The protein localises to the chloroplast thylakoid membrane. It catalyses the reaction a plastoquinone + NADH + (n+1) H(+)(in) = a plastoquinol + NAD(+) + n H(+)(out). It carries out the reaction a plastoquinone + NADPH + (n+1) H(+)(in) = a plastoquinol + NADP(+) + n H(+)(out). Functionally, NDH shuttles electrons from NAD(P)H:plastoquinone, via FMN and iron-sulfur (Fe-S) centers, to quinones in the photosynthetic chain and possibly in a chloroplast respiratory chain. The immediate electron acceptor for the enzyme in this species is believed to be plastoquinone. Couples the redox reaction to proton translocation, and thus conserves the redox energy in a proton gradient. The protein is NAD(P)H-quinone oxidoreductase subunit H, chloroplastic of Solanum lycopersicum (Tomato).